The sequence spans 493 residues: Cytoplasmic tRNA 2-thiolation protein 2 (493 aa).

Phosphoserine is present on S489.

The protein belongs to the CTU2/NCS2 family. As to quaternary structure, interacts with NCS6 and URM1. May act by forming a heterodimer with NCS6.

It localises to the cytoplasm. It participates in tRNA modification; 5-methoxycarbonylmethyl-2-thiouridine-tRNA biosynthesis. In terms of biological role, plays a central role in 2-thiolation of mcm(5)S(2)U at tRNA wobble positions of tRNA(Lys), tRNA(Glu) and tRNA(Gln). May act by forming a heterodimer with NCS6 that ligates sulfur from thiocarboxylated URM1 onto the uridine of tRNAs at wobble position. Prior mcm(5) tRNA modification by the elongator complex is required for 2-thiolation. May also be involved in protein urmylation. This chain is Cytoplasmic tRNA 2-thiolation protein 2, found in Saccharomyces cerevisiae (strain RM11-1a) (Baker's yeast).